A 373-amino-acid chain; its full sequence is NADH-quinone oxidoreductase subunit D (373 aa).

It belongs to the complex I 49 kDa subunit family. As to quaternary structure, NDH-1 is composed of 14 different subunits. Subunits NuoB, C, D, E, F, and G constitute the peripheral sector of the complex.

Its subcellular location is the cell inner membrane. It carries out the reaction a quinone + NADH + 5 H(+)(in) = a quinol + NAD(+) + 4 H(+)(out). Its function is as follows. NDH-1 shuttles electrons from NADH, via FMN and iron-sulfur (Fe-S) centers, to quinones in the respiratory chain. The immediate electron acceptor for the enzyme in this species is believed to be ubiquinone. Couples the redox reaction to proton translocation (for every two electrons transferred, four hydrogen ions are translocated across the cytoplasmic membrane), and thus conserves the redox energy in a proton gradient. The chain is NADH-quinone oxidoreductase subunit D from Syntrophobacter fumaroxidans (strain DSM 10017 / MPOB).